A 130-amino-acid chain; its full sequence is MNDPIGDMLTRIRNSQMRGKSTVMTPASKLRAWVLDVLQSEGYIRGYESATDERGHPALEISLKYYEGEPVIRELKRVSKPGRRVYMGVNDIPSVRQGLGVSIVSTPKGVMSDANARAANVGGEVLCTVF.

The protein belongs to the universal ribosomal protein uS8 family. In terms of assembly, part of the 30S ribosomal subunit. Contacts proteins S5 and S12.

Functionally, one of the primary rRNA binding proteins, it binds directly to 16S rRNA central domain where it helps coordinate assembly of the platform of the 30S subunit. The protein is Small ribosomal subunit protein uS8 of Ruegeria sp. (strain TM1040) (Silicibacter sp.).